The chain runs to 304 residues: Type II methyltransferase M.ScaI (304 aa).

The protein belongs to the N(4)/N(6)-methyltransferase family. N(4) subfamily.

The catalysed reaction is a 2'-deoxycytidine in DNA + S-adenosyl-L-methionine = an N(4)-methyl-2'-deoxycytidine in DNA + S-adenosyl-L-homocysteine + H(+). In terms of biological role, a methylase that recognizes the double-stranded sequence 5'-AGTACT-3', methylates C-5 on both strands, and protects the DNA from cleavage by the ScaI endonuclease. The sequence is that of Type II methyltransferase M.ScaI from Streptomyces caespitosus.